Here is a 123-residue protein sequence, read N- to C-terminus: Defensin beta 118 (123 aa).

The first 19 residues, 1-19 (MKLLLLALPMLVLLPQVIP), serve as a signal peptide directing secretion. 3 cysteine pairs are disulfide-bonded: Cys-27-Cys-54, Cys-34-Cys-48, and Cys-38-Cys-55. Positions 65-123 (VPTTSPTPLSDSTRGVIDDILTVRFTTDYFEVSSKKNMVEESEVGQGTQTSLPNVHHSS) are excised as a propeptide. Residues 100-123 (KNMVEESEVGQGTQTSLPNVHHSS) form a disordered region. Residues 109–123 (GQGTQTSLPNVHHSS) show a composition bias toward polar residues.

Belongs to the beta-defensin family. The three-dimensional structure formed by the three intramolecular disulfide bridges is indispensable for antimicrobial activity.

It localises to the secreted. Its function is as follows. Host defense peptide that exhibits antimicrobial activity against both Gram-negative bacteria, such as E.coli and S.typhimurium, and Gram-positive bacteria, such as S.aureus and B.subtilis. Inhibits cell adhesion of E.coli on intestinal epithelial enterocytes. Causes rapid permeabilization of both the outer and inner membrane of E.coli, leading to morphological alterations on the bacterial surface. Binds to bacterial lipopolysaccharides (LPS) with high affinity, and may thereby be involved in immunoregulation through LPS neutralization. May contribute to epididymal innate immunity and protect the sperm against attack by microorganisms. This chain is Defensin beta 118 (DEFB118), found in Pongo pygmaeus (Bornean orangutan).